Consider the following 163-residue polypeptide: Cuticle protein 38 (163 aa).

A run of 14 repeats spans residues 7-10 (AAPV), 13-16 (AAPA), 20-23 (AAPA), 26-29 (AAPV), 56-59 (AAPA), 62-65 (AAPA), 68-71 (AAPA), 75-78 (AAPA), 81-84 (AAPA), 93-96 (AAPV), 123-126 (AAPA), 135-138 (AAPA), 141-144 (AAPA), and 156-159 (AAPV).

In terms of biological role, component of the cuticle of migratory locust which contains more than 100 different structural proteins. This Locusta migratoria (Migratory locust) protein is Cuticle protein 38.